We begin with the raw amino-acid sequence, 380 residues long: Queuine tRNA-ribosyltransferase (380 aa).

D96 functions as the Proton acceptor in the catalytic mechanism. Residues 96–100 (DSGGF), D150, Q193, and G220 each bind substrate. The tract at residues 251–257 (GVGAPDS) is RNA binding. The active-site Nucleophile is the D270. The interval 275–279 (TRIAR) is RNA binding; important for wobble base 34 recognition. Zn(2+) is bound by residues C308, C310, C313, and H339.

Belongs to the queuine tRNA-ribosyltransferase family. As to quaternary structure, homodimer. Within each dimer, one monomer is responsible for RNA recognition and catalysis, while the other monomer binds to the replacement base PreQ1. Requires Zn(2+) as cofactor.

The catalysed reaction is 7-aminomethyl-7-carbaguanine + guanosine(34) in tRNA = 7-aminomethyl-7-carbaguanosine(34) in tRNA + guanine. It functions in the pathway tRNA modification; tRNA-queuosine biosynthesis. Catalyzes the base-exchange of a guanine (G) residue with the queuine precursor 7-aminomethyl-7-deazaguanine (PreQ1) at position 34 (anticodon wobble position) in tRNAs with GU(N) anticodons (tRNA-Asp, -Asn, -His and -Tyr). Catalysis occurs through a double-displacement mechanism. The nucleophile active site attacks the C1' of nucleotide 34 to detach the guanine base from the RNA, forming a covalent enzyme-RNA intermediate. The proton acceptor active site deprotonates the incoming PreQ1, allowing a nucleophilic attack on the C1' of the ribose to form the product. After dissociation, two additional enzymatic reactions on the tRNA convert PreQ1 to queuine (Q), resulting in the hypermodified nucleoside queuosine (7-(((4,5-cis-dihydroxy-2-cyclopenten-1-yl)amino)methyl)-7-deazaguanosine). This is Queuine tRNA-ribosyltransferase from Streptococcus pyogenes serotype M1.